Here is a 147-residue protein sequence, read N- to C-terminus: D(1B) dopamine receptor (147 aa).

Residues 1–12 traverse the membrane as a helical segment; it reads SILISFPVQLNW. Residues 13 to 55 lie on the Extracellular side of the membrane; the sequence is HRDQAGSWGGLDLTNNLANWTPWEEDVWEPDVRAENCDSSLNR. N-linked (GlcNAc...) asparagine glycosylation is present at Asn54. A helical membrane pass occupies residues 56-78; it reads TYAISSSLVSFYIPVAIMIVTYT. Over 79–128 the chain is Cytoplasmic; that stretch reads RIYRIAQVQIRRISSLERAAEHAQSCRSSAACAPDTSLRASIKKETKVLK. The helical transmembrane segment at 129–147 threads the bilayer; sequence TLSVIMGVFVCCWLPFFIL.

Belongs to the G-protein coupled receptor 1 family.

It localises to the cell membrane. Functionally, dopamine receptor whose activity is mediated by G proteins which activate adenylyl cyclase. In Macaca mulatta (Rhesus macaque), this protein is D(1B) dopamine receptor (DRD5).